Reading from the N-terminus, the 296-residue chain is Homoserine kinase (296 aa).

86-96 (KAGSGLGSSAA) is an ATP binding site.

It belongs to the GHMP kinase family. Homoserine kinase subfamily.

Its subcellular location is the cytoplasm. The catalysed reaction is L-homoserine + ATP = O-phospho-L-homoserine + ADP + H(+). Its pathway is amino-acid biosynthesis; L-threonine biosynthesis; L-threonine from L-aspartate: step 4/5. Its function is as follows. Catalyzes the ATP-dependent phosphorylation of L-homoserine to L-homoserine phosphate. In Methanocaldococcus jannaschii (strain ATCC 43067 / DSM 2661 / JAL-1 / JCM 10045 / NBRC 100440) (Methanococcus jannaschii), this protein is Homoserine kinase (thrB).